We begin with the raw amino-acid sequence, 152 residues long: D-aminoacyl-tRNA deacylase (152 aa).

A Gly-cisPro motif, important for rejection of L-amino acids motif is present at residues 142–143 (GP).

It belongs to the DTD family. As to quaternary structure, homodimer.

It is found in the cytoplasm. It carries out the reaction glycyl-tRNA(Ala) + H2O = tRNA(Ala) + glycine + H(+). The catalysed reaction is a D-aminoacyl-tRNA + H2O = a tRNA + a D-alpha-amino acid + H(+). In terms of biological role, an aminoacyl-tRNA editing enzyme that deacylates mischarged D-aminoacyl-tRNAs. Also deacylates mischarged glycyl-tRNA(Ala), protecting cells against glycine mischarging by AlaRS. Acts via tRNA-based rather than protein-based catalysis; rejects L-amino acids rather than detecting D-amino acids in the active site. By recycling D-aminoacyl-tRNA to D-amino acids and free tRNA molecules, this enzyme counteracts the toxicity associated with the formation of D-aminoacyl-tRNA entities in vivo and helps enforce protein L-homochirality. The sequence is that of D-aminoacyl-tRNA deacylase from Burkholderia mallei (strain NCTC 10247).